The primary structure comprises 148 residues: 3-dehydroquinate dehydratase (148 aa).

Catalysis depends on Tyr-23, which acts as the Proton acceptor. Residues Asn-75, His-81, and Asp-88 each coordinate substrate. His-101 (proton donor) is an active-site residue. Substrate contacts are provided by residues 102 to 103 (LS) and Arg-112.

It belongs to the type-II 3-dehydroquinase family. Homododecamer.

The enzyme catalyses 3-dehydroquinate = 3-dehydroshikimate + H2O. It functions in the pathway metabolic intermediate biosynthesis; chorismate biosynthesis; chorismate from D-erythrose 4-phosphate and phosphoenolpyruvate: step 3/7. In terms of biological role, catalyzes a trans-dehydration via an enolate intermediate. The protein is 3-dehydroquinate dehydratase of Xanthomonas campestris pv. campestris (strain 8004).